Consider the following 333-residue polypeptide: Probable cytosolic iron-sulfur protein assembly protein 1 (333 aa).

WD repeat units follow at residues 12–50 (LHDD…IIEE), 55–94 (AHKK…YNDE), 107–146 (GHEN…EEFE), 153–192 (EHSQ…WECC), 197–238 (GHEG…GEYE), 250–288 (AHTR…WIVE), and 298–333 (YETN…FDEN).

It belongs to the WD repeat CIA1 family. As to quaternary structure, interacts with NAR1.

The protein localises to the cytoplasm. The protein resides in the nucleus. In terms of biological role, essential component of the cytosolic iron-sulfur (Fe/S) protein assembly machinery. Required for the maturation of extramitochondrial Fe/S proteins. The sequence is that of Probable cytosolic iron-sulfur protein assembly protein 1 from Kluyveromyces lactis (strain ATCC 8585 / CBS 2359 / DSM 70799 / NBRC 1267 / NRRL Y-1140 / WM37) (Yeast).